A 174-amino-acid chain; its full sequence is Small ribosomal subunit protein uS5 (174 aa).

An S5 DRBM domain is found at 16 to 79 (FSELIVSVRR…NAAKKNMIRV (64 aa)).

Belongs to the universal ribosomal protein uS5 family. As to quaternary structure, part of the 30S ribosomal subunit. Contacts proteins S4 and S8.

In terms of biological role, with S4 and S12 plays an important role in translational accuracy. Its function is as follows. Located at the back of the 30S subunit body where it stabilizes the conformation of the head with respect to the body. The chain is Small ribosomal subunit protein uS5 from Ehrlichia canis (strain Jake).